The primary structure comprises 317 residues: Olfactory receptor 2B11 (317 aa).

Residues 1 to 29 lie on the Extracellular side of the membrane; that stretch reads MKSDNHSFLGDSPKAFILLGVSDRPWLEL. N5 carries an N-linked (GlcNAc...) asparagine glycan. The chain crosses the membrane as a helical span at residues 30 to 53; sequence PLFVVLLLSYVLAMLGNVAIILAS. The Cytoplasmic segment spans residues 54–61; sequence RVDPQLHS. The chain crosses the membrane as a helical span at residues 62 to 83; it reads PMYIFLSHLSFLDLCYTTTTVP. Topologically, residues 84–104 are extracellular; sequence QMLVNMGSSQKTISYGGCTVQ. A disulfide bond links C101 and C193. A helical membrane pass occupies residues 105-124; the sequence is YAVFHWLGCTECIVLAAMAL. The Cytoplasmic portion of the chain corresponds to 125-143; it reads DRYVAICKPLHYAVLMHRA. The chain crosses the membrane as a helical span at residues 144–162; that stretch reads LCQQLVALAWLSGFGNSFV. Over 163–199 the chain is Extracellular; that stretch reads QVVLTVQLPFCGRQVLNNFFCEVPAVIKLSCADTAVN. N199 carries an N-linked (GlcNAc...) asparagine glycan. The chain crosses the membrane as a helical span at residues 200–223; it reads DTILAVLVAFFVLVPLALILLSYG. Residues 224–240 lie on the Cytoplasmic side of the membrane; the sequence is FIARAVLRIQSSKGRHK. The helical transmembrane segment at 241–263 threads the bilayer; the sequence is AFGTCSSHLMIVSLFYLPAIYMY. Residues 264-276 lie on the Extracellular side of the membrane; it reads LQPPSSYSQEQGK. The helical transmembrane segment at 277-296 threads the bilayer; the sequence is FISLFYSIITPTLNPFTYTL. Over 297 to 317 the chain is Cytoplasmic; sequence RNKDMKGALRRLLARIWRLCG.

It belongs to the G-protein coupled receptor 1 family.

The protein localises to the cell membrane. In terms of biological role, odorant receptor. The polypeptide is Olfactory receptor 2B11 (OR2B11) (Homo sapiens (Human)).